Consider the following 276-residue polypeptide: Large ribosomal subunit protein uL2 (276 aa).

2 disordered regions span residues 29–54 (PEKS…SRRR) and 224–276 (AMNP…RGQR). The segment covering 256–276 (YKTRSKKKPSSKLIVKRRGQR) has biased composition (basic residues).

The protein belongs to the universal ribosomal protein uL2 family. Part of the 50S ribosomal subunit. Forms a bridge to the 30S subunit in the 70S ribosome.

Functionally, one of the primary rRNA binding proteins. Required for association of the 30S and 50S subunits to form the 70S ribosome, for tRNA binding and peptide bond formation. It has been suggested to have peptidyltransferase activity; this is somewhat controversial. Makes several contacts with the 16S rRNA in the 70S ribosome. The sequence is that of Large ribosomal subunit protein uL2 from Maridesulfovibrio salexigens (strain ATCC 14822 / DSM 2638 / NCIMB 8403 / VKM B-1763) (Desulfovibrio salexigens).